The sequence spans 1445 residues: DNA-directed RNA polymerase subunit beta'' (1445 aa).

Zn(2+) contacts are provided by Cys-220, Cys-293, Cys-300, and Cys-303.

This sequence belongs to the RNA polymerase beta' chain family. RpoC2 subfamily. In terms of assembly, in plastids the minimal PEP RNA polymerase catalytic core is composed of four subunits: alpha, beta, beta', and beta''. When a (nuclear-encoded) sigma factor is associated with the core the holoenzyme is formed, which can initiate transcription. Requires Zn(2+) as cofactor.

It localises to the plastid. Its subcellular location is the chloroplast. It carries out the reaction RNA(n) + a ribonucleoside 5'-triphosphate = RNA(n+1) + diphosphate. DNA-dependent RNA polymerase catalyzes the transcription of DNA into RNA using the four ribonucleoside triphosphates as substrates. This Anthoceros angustus (Hornwort) protein is DNA-directed RNA polymerase subunit beta''.